A 357-amino-acid polypeptide reads, in one-letter code: Phosphoribosylformylglycinamidine cyclo-ligase (357 aa).

It belongs to the AIR synthase family.

It localises to the cytoplasm. It catalyses the reaction 2-formamido-N(1)-(5-O-phospho-beta-D-ribosyl)acetamidine + ATP = 5-amino-1-(5-phospho-beta-D-ribosyl)imidazole + ADP + phosphate + H(+). It participates in purine metabolism; IMP biosynthesis via de novo pathway; 5-amino-1-(5-phospho-D-ribosyl)imidazole from N(2)-formyl-N(1)-(5-phospho-D-ribosyl)glycinamide: step 2/2. This Rhizobium johnstonii (strain DSM 114642 / LMG 32736 / 3841) (Rhizobium leguminosarum bv. viciae) protein is Phosphoribosylformylglycinamidine cyclo-ligase.